Consider the following 72-residue polypeptide: Translation initiation factor IF-1 (72 aa).

The region spanning 1–72 (MAKEDCIEME…TKGRIKFRSK (72 aa)) is the S1-like domain.

It belongs to the IF-1 family. In terms of assembly, component of the 30S ribosomal translation pre-initiation complex which assembles on the 30S ribosome in the order IF-2 and IF-3, IF-1 and N-formylmethionyl-tRNA(fMet); mRNA recruitment can occur at any time during PIC assembly.

The protein localises to the cytoplasm. In terms of biological role, one of the essential components for the initiation of protein synthesis. Stabilizes the binding of IF-2 and IF-3 on the 30S subunit to which N-formylmethionyl-tRNA(fMet) subsequently binds. Helps modulate mRNA selection, yielding the 30S pre-initiation complex (PIC). Upon addition of the 50S ribosomal subunit IF-1, IF-2 and IF-3 are released leaving the mature 70S translation initiation complex. The protein is Translation initiation factor IF-1 of Francisella tularensis subsp. tularensis (strain FSC 198).